Consider the following 520-residue polypeptide: Ribonuclease Y (520 aa).

A helical membrane pass occupies residues 3–23; sequence IEIAIVLILAAAGLGYFVGNM. Residues 210 to 273 enclose the KH domain; sequence SVSVVALPSD…EVAKIALEKL (64 aa). Positions 336–429 constitute an HD domain; the sequence is VYQHSLEVAF…VQAADALSGA (94 aa).

This sequence belongs to the RNase Y family.

It localises to the cell membrane. In terms of biological role, endoribonuclease that initiates mRNA decay. This is Ribonuclease Y from Geobacter metallireducens (strain ATCC 53774 / DSM 7210 / GS-15).